The chain runs to 60 residues: Small, acid-soluble spore protein H 1 (60 aa).

The interval 39–60 (IHPLDNPNQKQSVPVASLEEHS) is disordered.

It belongs to the SspH family.

The protein localises to the spore core. This Geobacillus kaustophilus (strain HTA426) protein is Small, acid-soluble spore protein H 1.